A 183-amino-acid chain; its full sequence is Pectinesterase inhibitor 8 (183 aa).

Residues 1 to 30 form the signal peptide; the sequence is MAQRASRRPAAAAAAVVVAVVLAVSGGVGA. 2 disulfide bridges follow: cysteine 36–cysteine 51 and cysteine 107–cysteine 147.

The protein belongs to the PMEI family.

It localises to the secreted. Its subcellular location is the extracellular space. It is found in the apoplast. In terms of biological role, pectin methylesterase (PME) inhibitor that inhibits PME in vitro. The chain is Pectinesterase inhibitor 8 from Oryza sativa subsp. japonica (Rice).